We begin with the raw amino-acid sequence, 163 residues long: Seed allergenic protein RAG1 (163 aa).

Residues 1–27 (MASNKVVFSVLLLVVLSVLAAAMATMA) form the signal peptide. Intrachain disulfides connect Cys39/Cys90, Cys53/Cys78, Cys61/Cys122, Cys79/Cys138, and Cys92/Cys150.

Belongs to the cereal trypsin/alpha-amylase inhibitor family. Five disulfide bonds are present.

Its subcellular location is the secreted. Its function is as follows. Seed storage protein. This Oryza sativa subsp. japonica (Rice) protein is Seed allergenic protein RAG1 (RAG1).